We begin with the raw amino-acid sequence, 258 residues long: Pyridoxal phosphate homeostasis protein (258 aa).

Residue Lys-47 is modified to N6-(pyridoxal phosphate)lysine.

It belongs to the pyridoxal phosphate-binding protein YggS/PROSC family.

Its function is as follows. Pyridoxal 5'-phosphate (PLP)-binding protein, which is involved in PLP homeostasis. The polypeptide is Pyridoxal phosphate homeostasis protein (Mycobacterium bovis (strain ATCC BAA-935 / AF2122/97)).